The sequence spans 310 residues: Serine protease 30 (310 aa).

An N-terminal signal peptide occupies residues 1-21 (MESRARCIFLLLLQILTRARG). The propeptide at 22–36 (DILPSVCGHSRDAGK) is activation peptide. A Peptidase S1 domain is found at 37–277 (IVGGQDALEG…YVDWIQRILA (241 aa)). A disulfide bond links C63 and C79. Residues H78 and D128 each act as charge relay system in the active site. 3 disulfide bridges follow: C161-C235, C191-C214, and C225-C253. Residue S229 is the Charge relay system of the active site. Residues N238 and N279 are each glycosylated (N-linked (GlcNAc...) asparagine). A lipid anchor (GPI-anchor amidated serine) is attached at S281. Residues 282–310 (DAYGYHSSASAAYQMLLPVLLAVALPGSL) constitute a propeptide, removed in mature form.

The protein belongs to the peptidase S1 family. In terms of tissue distribution, expressed primarily in distal gut.

Its subcellular location is the cell membrane. Its activity is regulated as follows. Inhibited by aprotinin, leupeptin, benzamidine and soybean trypsin inhibitor. Partially inhibited by PMSF and DFP. Selectively cleaves synthetic peptide substrates of trypsin. Activates the epithelial sodium channel ENaC. The protein is Serine protease 30 (Prss30) of Mus musculus (Mouse).